We begin with the raw amino-acid sequence, 63 residues long: Large ribosomal subunit protein uL30 (63 aa).

It belongs to the universal ribosomal protein uL30 family. As to quaternary structure, part of the 50S ribosomal subunit.

This chain is Large ribosomal subunit protein uL30, found in Rickettsia akari (strain Hartford).